The primary structure comprises 475 residues: UDP-N-acetylmuramate--L-alanine ligase (475 aa).

125 to 131 (GTHGKTT) is a binding site for ATP.

Belongs to the MurCDEF family.

The protein resides in the cytoplasm. It carries out the reaction UDP-N-acetyl-alpha-D-muramate + L-alanine + ATP = UDP-N-acetyl-alpha-D-muramoyl-L-alanine + ADP + phosphate + H(+). It participates in cell wall biogenesis; peptidoglycan biosynthesis. Its function is as follows. Cell wall formation. This is UDP-N-acetylmuramate--L-alanine ligase from Glaesserella parasuis serovar 5 (strain SH0165) (Haemophilus parasuis).